The sequence spans 890 residues: DNA mismatch repair protein MutS (890 aa).

607 to 614 is a binding site for ATP; the sequence is GPNMSGKS. Residues 832-851 form a disordered region; the sequence is ESQLSFFGGEQSSKKQDKPL.

The protein belongs to the DNA mismatch repair MutS family.

This protein is involved in the repair of mismatches in DNA. It is possible that it carries out the mismatch recognition step. This protein has a weak ATPase activity. This chain is DNA mismatch repair protein MutS, found in Bacillus cereus (strain B4264).